Consider the following 93-residue polypeptide: Large ribosomal subunit protein uL23cy (93 aa).

It belongs to the universal ribosomal protein uL23 family. In terms of assembly, part of the 50S ribosomal subunit.

The protein localises to the plastid. It localises to the chloroplast. Binds to 23S rRNA. The protein is Large ribosomal subunit protein uL23cy (rpl23-B) of Sorghum bicolor (Sorghum).